A 715-amino-acid polypeptide reads, in one-letter code: Polyribonucleotide nucleotidyltransferase (715 aa).

Mg(2+) is bound by residues Asp-487 and Asp-493. In terms of domain architecture, KH spans 554–613; the sequence is PRIETFKIATDKIREVIGTGGKVIREIVEKTGAKVNIDDDGTVKVASSDGESIKAAIKWI. The S1 motif domain occupies 623–691; sequence NAIYDGTVVK…DRGKTRLSMK (69 aa). The segment at 696–715 is disordered; the sequence is ETGEDLEAKQKAAEGATAAE.

This sequence belongs to the polyribonucleotide nucleotidyltransferase family. It depends on Mg(2+) as a cofactor.

It localises to the cytoplasm. The catalysed reaction is RNA(n+1) + phosphate = RNA(n) + a ribonucleoside 5'-diphosphate. In terms of biological role, involved in mRNA degradation. Catalyzes the phosphorolysis of single-stranded polyribonucleotides processively in the 3'- to 5'-direction. This is Polyribonucleotide nucleotidyltransferase from Rhodopseudomonas palustris (strain BisB18).